A 218-amino-acid polypeptide reads, in one-letter code: GTP cyclohydrolase 1 (218 aa).

3 residues coordinate Zn(2+): Cys-109, His-112, and Cys-180.

It belongs to the GTP cyclohydrolase I family. Toroid-shaped homodecamer, composed of two pentamers of five dimers.

The catalysed reaction is GTP + H2O = 7,8-dihydroneopterin 3'-triphosphate + formate + H(+). The protein operates within cofactor biosynthesis; 7,8-dihydroneopterin triphosphate biosynthesis; 7,8-dihydroneopterin triphosphate from GTP: step 1/1. This is GTP cyclohydrolase 1 from Aeromonas salmonicida (strain A449).